An 813-amino-acid polypeptide reads, in one-letter code: Raf homolog serine/threonine-protein kinase (813 aa).

Residues 1 to 79 (MSRINFKKSS…GGAGTSDKEP (79 aa)) are disordered. The span at 9–23 (SSASTTPTSPHCPSP) shows a compositional bias: low complexity. Residues 85–161 (KMIMVHLPFD…PGNELWVHSE (77 aa)) form the RBD domain. The Phorbol-ester/DAG-type zinc finger occupies 170-217 (KHAIVRRTFIPPKSCDVCNNPIWMMGFRCEFCQFKFHQRCSSFAPLYC). Cysteine 184, cysteine 187, cysteine 198, cysteine 201, histidine 206, cysteine 209, and cysteine 217 together coordinate Zn(2+). Composition is skewed to polar residues over residues 258-273 (TSGQ…SHPD) and 291-301 (SPQNETSQLSP). Disordered regions lie at residues 258 to 315 (TSGQ…SAPN), 338 to 358 (QRLE…QARH), and 383 to 472 (TPLG…PHHE). Residues 338–348 (QRLEEESRDKT) are compositionally biased toward basic and acidic residues. Residues 386 to 399 (GSNSPSSTCSSPPG) are compositionally biased toward low complexity. Residues 406-421 (TLGQSPNVSGSTTSSL) are compositionally biased toward polar residues. A compositionally biased stretch (basic and acidic residues) spans 453-462 (SPGERLDAQR). Positions 481 to 748 (FIIQYKVGSG…VLERLRDIIL (268 aa)) constitute a Protein kinase domain. ATP contacts are provided by residues 487-495 (VGSGSFGTV) and lysine 507. Aspartate 602 functions as the Proton acceptor in the catalytic mechanism.

The protein belongs to the protein kinase superfamily. TKL Ser/Thr protein kinase family. RAF subfamily. Interacts with cdf-1 in a zinc-dependent manner which promotes its activity. The cofactor is Zn(2+).

It catalyses the reaction L-seryl-[protein] + ATP = O-phospho-L-seryl-[protein] + ADP + H(+). The enzyme catalyses L-threonyl-[protein] + ATP = O-phospho-L-threonyl-[protein] + ADP + H(+). Functionally, protein kinase that participates in the induction of vulva and has roles in fertility and viability. Acts downstream of the Ras protein let-60. Required for progression of developing oocytes through the pachytene stage. Plays a role in responses to M.nematophilum-mediated bacterial infection by promoting tail swelling and preventing constipation. Positively regulates lifespan upstream of mek-2 and mpk-1. In Caenorhabditis elegans, this protein is Raf homolog serine/threonine-protein kinase (lin-45).